The following is a 272-amino-acid chain: L-aspartate dehydrogenase 3 (272 aa).

Residues A126 and N194 each contribute to the NAD(+) site. H224 is an active-site residue.

The protein belongs to the L-aspartate dehydrogenase family.

It carries out the reaction L-aspartate + NADP(+) + H2O = oxaloacetate + NH4(+) + NADPH + H(+). The enzyme catalyses L-aspartate + NAD(+) + H2O = oxaloacetate + NH4(+) + NADH + H(+). Its pathway is cofactor biosynthesis; NAD(+) biosynthesis; iminoaspartate from L-aspartate (dehydrogenase route): step 1/1. Its function is as follows. Specifically catalyzes the NAD or NADP-dependent dehydrogenation of L-aspartate to iminoaspartate. In Bordetella bronchiseptica (strain ATCC BAA-588 / NCTC 13252 / RB50) (Alcaligenes bronchisepticus), this protein is L-aspartate dehydrogenase 3.